The following is a 131-amino-acid chain: MENLTLSIVTPYGSIYNGEVKYVVIPGSEGEFGVFPGHCNLLSLLKVGVIEFENLEGNKGLVAINWGHAQISDTDVNIIADGAVAIAGNTESEIVAAISDAKTLLKEASDDSALFGMVVSRVESDYKNFIK.

This sequence belongs to the ATPase epsilon chain family. F-type ATPases have 2 components, CF(1) - the catalytic core - and CF(0) - the membrane proton channel. CF(1) has five subunits: alpha(3), beta(3), gamma(1), delta(1), epsilon(1). CF(0) has three main subunits: a, b and c.

It is found in the cell inner membrane. Its function is as follows. Produces ATP from ADP in the presence of a proton gradient across the membrane. This Helicobacter hepaticus (strain ATCC 51449 / 3B1) protein is ATP synthase epsilon chain.